Reading from the N-terminus, the 815-residue chain is SNF1 protein kinase subunit beta-1 (815 aa).

Residues 1 to 11 (MGNSPSTQDPS) show a composition bias toward polar residues. 2 disordered regions span residues 1-88 (MGNS…TIDK) and 117-146 (SDDH…TVKR). Gly2 carries the N-myristoyl glycine lipid modification. A compositionally biased stretch (basic and acidic residues) spans 12–31 (HSTKKEHGHHFHDAFNKDRQ). Over residues 32–42 (GSITSQLFNNR) the composition is skewed to polar residues. At Ser33 the chain carries Phosphoserine. Composition is skewed to basic and acidic residues over residues 72-88 (PSTD…TIDK) and 117-129 (SDDH…EEQV). Phosphoserine is present on residues Ser181, Ser198, Ser200, Ser206, Ser209, and Ser220. Disordered regions lie at residues 311-335 (HANN…NDDF) and 362-389 (KHHN…FASL). The segment covering 313–326 (NNNGNIENNTRNKG) has biased composition (low complexity). At Ser331 the chain carries Phosphoserine. Residues 363–376 (HHNKTKKAQNKKIR) are compositionally biased toward basic residues. Residues 377–389 (SVSNSRRSSFASL) show a composition bias toward low complexity. Positions 473–716 (VSTDIASALK…LQQGGNIDAE (244 aa)) are kinase-interacting sequence (KIS); required for interaction with SNF1. A phosphoserine mark is found at Ser494 and Ser497. A disordered region spans residues 581-616 (EPTLDEELPKRPELKRFPSSSRKSSYYSAKGVERPS). Basic and acidic residues predominate over residues 587 to 596 (ELPKRPELKR). Residues 599–608 (SSSRKSSYYS) show a composition bias toward low complexity. Ser643 carries the phosphoserine modification. Residues 724-804 (SRYPVPDLPI…FITQVVYAPC (81 aa)) form an association with SNF1 kinase complex (ASC) domain; required for interaction with SNF4 region.

The protein belongs to the 5'-AMP-activated protein kinase beta subunit family. In terms of assembly, component of the SNF1 kinase complex, a heterotrimeric complex composed of the catalytic alpha subunit SNF1, one of the three related beta subunits SIP1, SIP2 or GAL83, and the regulatory gamma subunit SNF4. The beta subunit serves as a bridge between the catalytic and the regulatory subunit. Interacts (via KIS domain) with SNF1. Interacts (via ASC domain) with SNF4. Phosphorylated by SNF1 in vitro.

The protein localises to the cytoplasm. Its subcellular location is the vacuole membrane. Beta subunit of the SNF1 kinase complex, which is required for transcriptional, metabolic, and developmental adaptations in response to glucose limitation. Has a structural role, mediating heterotrimer formation, and a regulatory role, defining carbon source-regulated subcellular location and substrate specificity of the SNF1 kinase complex. Promotes the PKA-regulated relocalization of the SNF1 kinase complex to the vacuolar membrane in response to various types of carbon stress. The chain is SNF1 protein kinase subunit beta-1 (SIP1) from Saccharomyces cerevisiae (strain ATCC 204508 / S288c) (Baker's yeast).